A 129-amino-acid chain; its full sequence is Large ribosomal subunit protein mL53 (129 aa).

A mitochondrion-targeting transit peptide spans 1–50 (MREKLNLLAKLKSVVYKFDPLNPNTRSIRSFIPLTTCKRSRQLAPECSIS).

This sequence belongs to the mitochondrion-specific ribosomal protein mL53 family.

Its subcellular location is the mitochondrion. The polypeptide is Large ribosomal subunit protein mL53 (mrpl53) (Dictyostelium discoideum (Social amoeba)).